Consider the following 434-residue polypeptide: Lipoyl synthase, mitochondrial (434 aa).

Residues 1-31 (MAASARGLRTLQSAHSSTTVPRLQLAVSRCY) constitute a mitochondrion transit peptide. The span at 34-54 (TTSPDPPITNSSNSSNSTPTP) shows a compositional bias: low complexity. Residues 34-55 (TTSPDPPITNSSNSSNSTPTPK) are disordered. [4Fe-4S] cluster contacts are provided by Cys-144, Cys-149, Cys-155, Cys-175, Cys-179, Cys-182, and Ser-390. A Radical SAM core domain is found at 158–379 (GSSKSAATAT…KERALEMGFL (222 aa)).

It belongs to the radical SAM superfamily. Lipoyl synthase family. Requires [4Fe-4S] cluster as cofactor.

The protein localises to the mitochondrion. It catalyses the reaction [[Fe-S] cluster scaffold protein carrying a second [4Fe-4S](2+) cluster] + N(6)-octanoyl-L-lysyl-[protein] + 2 oxidized [2Fe-2S]-[ferredoxin] + 2 S-adenosyl-L-methionine + 4 H(+) = [[Fe-S] cluster scaffold protein] + N(6)-[(R)-dihydrolipoyl]-L-lysyl-[protein] + 4 Fe(3+) + 2 hydrogen sulfide + 2 5'-deoxyadenosine + 2 L-methionine + 2 reduced [2Fe-2S]-[ferredoxin]. It participates in protein modification; protein lipoylation via endogenous pathway; protein N(6)-(lipoyl)lysine from octanoyl-[acyl-carrier-protein]: step 2/2. Functionally, catalyzes the radical-mediated insertion of two sulfur atoms into the C-6 and C-8 positions of the octanoyl moiety bound to the lipoyl domains of lipoate-dependent enzymes, thereby converting the octanoylated domains into lipoylated derivatives. The sequence is that of Lipoyl synthase, mitochondrial from Paracoccidioides brasiliensis (strain Pb03).